The chain runs to 471 residues: Proton-coupled amino acid transporter-like protein pathetic (471 aa).

N61 is a glycosylation site (N-linked (GlcNAc...) asparagine). 10 helical membrane-spanning segments follow: residues 81–101, 153–173, 187–207, 216–236, 253–273, 283–303, 337–357, 375–395, 397–417, and 432–452; these read FAFMCSGLIMGIFSTIFTAFI, ILFGLFLTYFGTCSVYTVIVA, AVSLRMLICIMLVPLILIAWV, VSMVANVFMGLGLGITFYYLV, LPQFFSITIFAMEAIGVVMPL, FLGICGVLSQGMSGVTLIYML, LISLAVYCTFGLQFFVCLEII, VLRTVLVTAAVVLAVAVPTIG, FMGLIGAFCFSILGLIFPVVI, and WILWKNAIITLCGIGALVFGT.

Belongs to the amino acid/polyamine transporter 2 family. As to expression, in third instar larvae, expressed at highest levels in the brain and digestive system with particularly high levels in surface glia of the brain (at protein level). In third instar larvae, expressed in all cells of the body wall (at protein level). Within the body wall of third instar larvae, most highly expressed in epithelial cells and sensory neurons. Expressed at a similar level in all da neurons (at protein level). Widely expressed during embryonic and late larval stages. Levels are highly dynamic in embryogenesis with surges of expression in many structures, including muscle primordia, salivary glands, proventriculus, trachea and gonads. Expressed in all or most cells of larval imaginal disks. Expression is also particularly strong in the pouch and hinge regions of the wing disk and in the morphogenetic furrow of the eye disk.

The protein localises to the cell membrane. It localises to the lysosome membrane. The protein resides in the late endosome membrane. Its subcellular location is the cell projection. It is found in the axon. The protein localises to the dendrite. It localises to the perikaryon. The protein resides in the cytoplasm. Functionally, amino acid transporter which has pH-dependent electrogenic transport activity for alanine and glycine but not for proline. Plays a role in positive regulation of growth by directly or indirectly modulating the effects of the TOR signaling pathway. Required in a cell-autonomous manner for dendrite growth in neurons with large dendrite arbors. The sequence is that of Proton-coupled amino acid transporter-like protein pathetic from Drosophila melanogaster (Fruit fly).